A 151-amino-acid polypeptide reads, in one-letter code: Nucleoside diphosphate kinase (151 aa).

Lys-11, Phe-59, Arg-87, Thr-93, Arg-104, and Asn-114 together coordinate ATP. His-117 acts as the Pros-phosphohistidine intermediate in catalysis.

The protein belongs to the NDK family. Homotetramer. It depends on Mg(2+) as a cofactor.

Its subcellular location is the cytoplasm. It carries out the reaction a 2'-deoxyribonucleoside 5'-diphosphate + ATP = a 2'-deoxyribonucleoside 5'-triphosphate + ADP. The enzyme catalyses a ribonucleoside 5'-diphosphate + ATP = a ribonucleoside 5'-triphosphate + ADP. Functionally, major role in the synthesis of nucleoside triphosphates other than ATP. The ATP gamma phosphate is transferred to the NDP beta phosphate via a ping-pong mechanism, using a phosphorylated active-site intermediate. The chain is Nucleoside diphosphate kinase from Prochlorococcus marinus (strain NATL2A).